Here is a 230-residue protein sequence, read N- to C-terminus: MSRLPSLSRLCLAIACSALLGGCVAAGDVRPFAELAPIVPVVAPVAQPTAGAIYAAGPSLNLYGDRRARDVGDLLTVNLVESTTASSTANTSISKKDATTMGAPTLLGAPLTVGGLNVLENSTSGDRSFAGKGNTAQSNRMQGSVTVTVMQRLPNGNLVIQGQKNLRLTQGDELVQVQGIVRAADIAPDNTVPSSKVADARIAYGGRGAIAQSNAMGWLSRFFNSRLSPY.

The first 15 residues, 1–15 (MSRLPSLSRLCLAIA), serve as a signal peptide directing secretion. Cysteine 16 carries N-palmitoyl cysteine lipidation. Cysteine 16 is lipidated: S-diacylglycerol cysteine.

This sequence belongs to the FlgH family. As to quaternary structure, the basal body constitutes a major portion of the flagellar organelle and consists of four rings (L,P,S, and M) mounted on a central rod.

Its subcellular location is the cell outer membrane. The protein resides in the bacterial flagellum basal body. Its function is as follows. Assembles around the rod to form the L-ring and probably protects the motor/basal body from shearing forces during rotation. The protein is Flagellar L-ring protein of Xanthomonas euvesicatoria pv. vesicatoria (strain 85-10) (Xanthomonas campestris pv. vesicatoria).